A 952-amino-acid chain; its full sequence is Lysosomal alpha-glucosidase (952 aa).

The signal sequence occupies residues 1-27; that stretch reads MRVRHPPCSRRLLAICALVSLATAALL. Positions 28–69 are excised as a propeptide; it reads GHILLHDFLLVPRELSGSSPVLEETHPAHQQGASRPGPRDAQ. Positions 47 to 80 are disordered; it reads PVLEETHPAHQQGASRPGPRDAQAHLGRPRAVPT. Residues 80 to 131 form the P-type domain; the sequence is TQCDVPPNSRFDCAPDKAITREQCDARGCCYIPAKQGLRGAQMGQPWCFFPP. 3 disulfides stabilise this stretch: C82–C109, C92–C108, and C103–C127. Residues N140, N233, and N390 are each glycosylated (N-linked (GlcNAc...) asparagine). Position 404 (D404) interacts with substrate. A glycan (N-linked (GlcNAc...) asparagine) is linked at N470. The active-site Nucleophile is the D518. Residue E521 is part of the active site. The cysteines at positions 533 and 558 are disulfide-linked. R600 and D616 together coordinate substrate. The cysteines at positions 647 and 658 are disulfide-linked. Residue N652 is glycosylated (N-linked (GlcNAc...) asparagine). H674 provides a ligand contact to substrate. 2 N-linked (GlcNAc...) asparagine glycosylation sites follow: N882 and N925.

The protein belongs to the glycosyl hydrolase 31 family.

It is found in the lysosome. Its subcellular location is the lysosome membrane. It catalyses the reaction Hydrolysis of terminal, non-reducing (1-&gt;4)-linked alpha-D-glucose residues with release of alpha-D-glucose.. Its function is as follows. Essential for the degradation of glycogen in lysosomes. Has highest activity on alpha-1,4-linked glycosidic linkages, but can also hydrolyze alpha-1,6-linked glucans. This is Lysosomal alpha-glucosidase (GAA) from Pongo abelii (Sumatran orangutan).